The chain runs to 189 residues: Acireductone dioxygenase 1 (189 aa).

Residues H102, H104, E108, and H146 each contribute to the Fe(2+) site. Ni(2+)-binding residues include H102, H104, E108, and H146.

Belongs to the acireductone dioxygenase (ARD) family. As to quaternary structure, monomer. Requires Fe(2+) as cofactor. Ni(2+) serves as cofactor.

The enzyme catalyses 1,2-dihydroxy-5-(methylsulfanyl)pent-1-en-3-one + O2 = 3-(methylsulfanyl)propanoate + CO + formate + 2 H(+). It catalyses the reaction 1,2-dihydroxy-5-(methylsulfanyl)pent-1-en-3-one + O2 = 4-methylsulfanyl-2-oxobutanoate + formate + 2 H(+). It functions in the pathway amino-acid biosynthesis; L-methionine biosynthesis via salvage pathway; L-methionine from S-methyl-5-thio-alpha-D-ribose 1-phosphate: step 5/6. Functionally, catalyzes 2 different reactions between oxygen and the acireductone 1,2-dihydroxy-3-keto-5-methylthiopentene (DHK-MTPene) depending upon the metal bound in the active site. Fe-containing acireductone dioxygenase (Fe-ARD) produces formate and 2-keto-4-methylthiobutyrate (KMTB), the alpha-ketoacid precursor of methionine in the methionine recycle pathway. Ni-containing acireductone dioxygenase (Ni-ARD) produces methylthiopropionate, carbon monoxide and formate, and does not lie on the methionine recycle pathway. This is Acireductone dioxygenase 1 from Nocardia farcinica (strain IFM 10152).